The following is a 62-amino-acid chain: Large ribosomal subunit protein uL30 (62 aa).

Belongs to the universal ribosomal protein uL30 family. Part of the 50S ribosomal subunit.

The chain is Large ribosomal subunit protein uL30 from Ruegeria pomeroyi (strain ATCC 700808 / DSM 15171 / DSS-3) (Silicibacter pomeroyi).